Consider the following 144-residue polypeptide: Maximins 3/H14 (144 aa).

Residues 1 to 18 form the signal peptide; it reads MNFKYIVAVSFLIASAYA. 2 consecutive propeptides follow at residues 19–43 and 73–122; these read RSVQ…REIR and RTAE…KKEK. Ile-143 is modified (isoleucine amide).

Belongs to the bombinin family. As to expression, expressed by the skin glands.

The protein localises to the secreted. Its function is as follows. Maximin-3 shows antibacterial activity against both Gram-positive and Gram-negative bacteria. It also shows antimicrobial activity against the fungus C.albicans, but not against A.flavus nor P.uticale. It has little hemolytic activity. It possess a significant cytotoxicity against tumor cell lines. It possess a significant anti-HIV activity. It shows high spermicidal activity. Functionally, maximin-H14 shows antimicrobial activity against bacteria and against the fungus C.albicans. Shows strong hemolytic activity. The chain is Maximins 3/H14 from Bombina maxima (Giant fire-bellied toad).